The primary structure comprises 1404 residues: Clustered mitochondria protein homolog (1404 aa).

In terms of domain architecture, Clu spans 357-646 (HTHHADALRS…RLNPVDINWL (290 aa)). Residues 528–540 (ADELPEADGETTE) show a composition bias toward acidic residues. Disordered stretches follow at residues 528–561 (ADELPEADGETTELAEAAPEKKSPEAKLAQSNKA), 706–735 (DAKAKEAASKEDGEKTEAPEVEAEEPERLD), 996–1046 (GCHG…ARAT), and 1337–1372 (SERQARLPASRRGNSNAGGGAAAITGAGTTASGNGT). Residues 706-723 (DAKAKEAASKEDGEKTEA) show a composition bias toward basic and acidic residues. Composition is skewed to low complexity over residues 1021–1046 (NEQQNGVKKSNVGAAAAKPTKAARAT) and 1358–1372 (AAITGAGTTASGNGT).

Belongs to the CLU family. May associate with the eukaryotic translation initiation factor 3 (eIF-3) complex.

It localises to the cytoplasm. In terms of biological role, mRNA-binding protein involved in proper cytoplasmic distribution of mitochondria. This chain is Clustered mitochondria protein homolog, found in Mycosarcoma maydis (Corn smut fungus).